We begin with the raw amino-acid sequence, 138 residues long: Large ribosomal subunit protein uL14 (138 aa).

This sequence belongs to the universal ribosomal protein uL14 family. In terms of assembly, part of the 50S ribosomal subunit. Forms a cluster with proteins L3 and L24e, part of which may contact the 16S rRNA in 2 intersubunit bridges.

In terms of biological role, binds to 23S rRNA. Forms part of two intersubunit bridges in the 70S ribosome. This chain is Large ribosomal subunit protein uL14, found in Sulfurisphaera tokodaii (strain DSM 16993 / JCM 10545 / NBRC 100140 / 7) (Sulfolobus tokodaii).